Consider the following 89-residue polypeptide: UPF0147 protein YN1551_1489 (89 aa).

The protein belongs to the UPF0147 family.

In Saccharolobus islandicus (strain Y.N.15.51 / Yellowstone #2) (Sulfolobus islandicus), this protein is UPF0147 protein YN1551_1489.